The chain runs to 278 residues: Anamorsin homolog (278 aa).

The interval 1 to 147 is N-terminal SAM-like domain; sequence MESVSHLVSN…EIGSSAALPF (147 aa). The interval 147 to 191 is linker; sequence FANKISLGGNSKMETAKMWTLSSQDFVDDDIDIIDENTLIEEDDF. Positions 204, 214, 217, and 219 each coordinate [2Fe-2S] cluster. Residues 204 to 219 are fe-S binding site A; it reads CDSAKKKRKACKNCSC. The [4Fe-4S] cluster site is built by Cys-239, Cys-242, Cys-250, and Cys-253. Short sequence motifs (cx2C motif) lie at residues 239–242 and 250–253; these read CGSC and CSSC. The segment at 239–253 is fe-S binding site B; it reads CGSCYLGDAFRCSSC.

Belongs to the anamorsin family. In terms of assembly, monomer. [2Fe-2S] cluster is required as a cofactor. It depends on [4Fe-4S] cluster as a cofactor.

It is found in the cytoplasm. The protein localises to the mitochondrion intermembrane space. Its function is as follows. Component of the cytosolic iron-sulfur (Fe-S) protein assembly (CIA) machinery. Required for the maturation of extramitochondrial Fe-S proteins. Part of an electron transfer chain functioning in an early step of cytosolic Fe-S biogenesis, facilitating the de novo assembly of a [4Fe-4S] cluster on the cytosolic Fe-S scaffold complex. Electrons are transferred from NADPH via a FAD- and FMN-containing diflavin oxidoreductase. Together with the diflavin oxidoreductase, also required for the assembly of the diferric tyrosyl radical cofactor of ribonucleotide reductase (RNR), probably by providing electrons for reduction during radical cofactor maturation in the catalytic small subunit. This is Anamorsin homolog from Trichoplax adhaerens (Trichoplax reptans).